A 224-amino-acid chain; its full sequence is Superoxide dismutase [Mn], mitochondrial (224 aa).

The N-terminal 20 residues, 1–20 (MLLARAFARRSLRAGLWCRQ), are a transit peptide targeting the mitochondrion. His-46, His-94, Asp-177, and His-181 together coordinate Mn(2+).

It belongs to the iron/manganese superoxide dismutase family. In terms of assembly, homotetramer. The cofactor is Mn(2+).

The protein localises to the mitochondrion matrix. It carries out the reaction 2 superoxide + 2 H(+) = H2O2 + O2. In terms of biological role, destroys superoxide anion radicals which are normally produced within the cells and which are toxic to biological systems. This Charybdis feriata (Crucifix crab) protein is Superoxide dismutase [Mn], mitochondrial.